Reading from the N-terminus, the 335-residue chain is Trans-1,2-dihydrobenzene-1,2-diol dehydrogenase (335 aa).

Belongs to the Gfo/Idh/MocA family. Homodimer. Liver, lens, spleen, kidney and small intestine.

It carries out the reaction (1R,2R)-1,2-dihydrobenzene-1,2-diol + NADP(+) = catechol + NADPH + H(+). It catalyses the reaction D-xylose + NADP(+) = D-xylono-1,5-lactone + NADPH + H(+). Strongly inhibited by isoascorbic acid, 4-hydroxyacetophenone and chloromercuriphenylsulphonate. Stimulated by various salts. This is Trans-1,2-dihydrobenzene-1,2-diol dehydrogenase (DHDH) from Sus scrofa (Pig).